The sequence spans 333 residues: Endo-1,4-beta-xylanase (333 aa).

The first 17 residues, M1 to C17, serve as a signal peptide directing secretion. Positions Q18 to G330 constitute a GH10 domain. The active-site Proton donor is the E147. Catalysis depends on E252, which acts as the Nucleophile.

Belongs to the glycosyl hydrolase 10 (cellulase F) family.

It is found in the secreted. It catalyses the reaction Endohydrolysis of (1-&gt;4)-beta-D-xylosidic linkages in xylans.. The protein operates within glycan degradation; xylan degradation. Functionally, has xylanase activity. Seems to be involved in the release of sugars from the hemicellulolytic fraction in the compost. This is Endo-1,4-beta-xylanase (xlnA) from Agaricus bisporus (White button mushroom).